A 401-amino-acid chain; its full sequence is Nicotinate phosphoribosyltransferase (401 aa).

H221 is modified (phosphohistidine; by autocatalysis).

The protein belongs to the NAPRTase family. Transiently phosphorylated on a His residue during the reaction cycle. Phosphorylation strongly increases the affinity for substrates and increases the rate of nicotinate D-ribonucleotide production. Dephosphorylation regenerates the low-affinity form of the enzyme, leading to product release.

It catalyses the reaction nicotinate + 5-phospho-alpha-D-ribose 1-diphosphate + ATP + H2O = nicotinate beta-D-ribonucleotide + ADP + phosphate + diphosphate. It participates in cofactor biosynthesis; NAD(+) biosynthesis; nicotinate D-ribonucleotide from nicotinate: step 1/1. Catalyzes the synthesis of beta-nicotinate D-ribonucleotide from nicotinate and 5-phospho-D-ribose 1-phosphate at the expense of ATP. The polypeptide is Nicotinate phosphoribosyltransferase (Edwardsiella ictaluri (strain 93-146)).